The primary structure comprises 578 residues: Sulfite reductase [NADPH] hemoprotein beta-component (578 aa).

[4Fe-4S] cluster-binding residues include Cys-441, Cys-447, Cys-487, and Cys-491. Residue Cys-491 participates in siroheme binding.

Belongs to the nitrite and sulfite reductase 4Fe-4S domain family. As to quaternary structure, alpha(8)-beta(8). The alpha component is a flavoprotein, the beta component is a hemoprotein. It depends on siroheme as a cofactor. [4Fe-4S] cluster serves as cofactor.

It catalyses the reaction hydrogen sulfide + 3 NADP(+) + 3 H2O = sulfite + 3 NADPH + 4 H(+). It participates in sulfur metabolism; hydrogen sulfide biosynthesis; hydrogen sulfide from sulfite (NADPH route): step 1/1. Component of the sulfite reductase complex that catalyzes the 6-electron reduction of sulfite to sulfide. This is one of several activities required for the biosynthesis of L-cysteine from sulfate. This is Sulfite reductase [NADPH] hemoprotein beta-component from Vibrio vulnificus (strain CMCP6).